A 258-amino-acid polypeptide reads, in one-letter code: Ribonuclease HII (258 aa).

The region spanning 71–258 (QLIAGIDEVG…PIKTMVNFKS (188 aa)) is the RNase H type-2 domain. A divalent metal cation-binding residues include Asp77, Glu78, and Asp169.

It belongs to the RNase HII family. The cofactor is Mn(2+). Requires Mg(2+) as cofactor.

It is found in the cytoplasm. The catalysed reaction is Endonucleolytic cleavage to 5'-phosphomonoester.. Endonuclease that specifically degrades the RNA of RNA-DNA hybrids. The sequence is that of Ribonuclease HII (rnhB) from Lactococcus lactis subsp. lactis (strain IL1403) (Streptococcus lactis).